A 105-amino-acid chain; its full sequence is Urease subunit gamma (105 aa).

Belongs to the urease gamma subunit family. As to quaternary structure, heterotrimer of UreA (gamma), UreB (beta) and UreC (alpha) subunits. Three heterotrimers associate to form the active enzyme.

Its subcellular location is the cytoplasm. The enzyme catalyses urea + 2 H2O + H(+) = hydrogencarbonate + 2 NH4(+). Its pathway is nitrogen metabolism; urea degradation; CO(2) and NH(3) from urea (urease route): step 1/1. This Bacillus subtilis (strain 168) protein is Urease subunit gamma.